Here is a 348-residue protein sequence, read N- to C-terminus: MESLAHIPPGYRFHPTDEELVDYYLKNKVAFPGMQVDVIKDVDLYKIEPWDIQELCGRGTGEEREWYFFSHKDKKYPTGTRTNRATGSGFWKATGRDKAIYSKQELVGMRKTLVFYKGRAPNGQKSDWIMHEYRLETDENGPPHEEGWVVCRAFKKKLTTMNYNNPRTMMGSSSGQESNWFTQQMDVGNGNYYHLPDLESPRMFQGSSSSSLSSLHQNDQDPYGVVLSTINATPTTIMQRDDGHVITNDDDHMIMMNTSTGDHHQSGLLVNDDHNDQVMDWQTLDKFVASQLIMSQEEEEVNKDPSDNSSNETFHHLSEEQAATMVSMNASSSSSPCSFYSWAQNTHT.

One can recognise an NAC domain in the interval 7 to 156; it reads IPPGYRFHPT…GWVVCRAFKK (150 aa). Residues 107–162 mediate DNA binding; it reads VGMRKTLVFYKGRAPNGQKSDWIMHEYRLETDENGPPHEEGWVVCRAFKKKLTTMN. The segment at 325–348 is disordered; the sequence is MVSMNASSSSSPCSFYSWAQNTHT. Positions 327-341 are enriched in low complexity; sequence SMNASSSSSPCSFYS.

The protein belongs to the plant vascular related NAC-domain protein family. In terms of assembly, homodimer. In terms of tissue distribution, expressed in root inner metaxylem vessels and in hypocotyl vessels. Present in root developing xylems. Accumulates in the xylem but not in interfascicular fibers or pith cells in inflorescence stems. Absent from secondary xylem in roots.

The protein localises to the nucleus. Functionally, transcription activator that binds to the secondary wall NAC binding element (SNBE), 5'-(T/A)NN(C/T)(T/C/G)TNNNNNNNA(A/C)GN(A/C/T)(A/T)-3', and to the tracheary elements (TE) specific regulating cis-element (TERE), 5'-CTTNAAAGCNA-3', in the promoter of target genes (e.g. genes involved in secondary wall biosynthesis, cell wall modification such as xylan accumulation, and programmed cell death). Involved in xylem formation in roots and shoots, especially regulating metaxylem vessel differentiation by promoting immature xylem vessel-specific genes expression, especially genes regulating programmed cell death (PCD) and secondary wall formation in tracheary elements (TE). Can activate MYB25, MYB46, MYB58, MYB63, MYB83, MYB103, CESA4, LBD15, LBD30, ERF115, XCP1, XCP2, NAC010/SND3, KNAT7, ASL19 and ASL20 expression. The protein is NAC domain-containing protein 101 of Arabidopsis thaliana (Mouse-ear cress).